Reading from the N-terminus, the 314-residue chain is UPF0761 membrane protein VP0125 (314 aa).

6 helical membrane passes run 41-61 (YLAY…LSIL), 104-124 (MSAV…SNID), 139-159 (LVFS…LVGA), 185-205 (FLRW…YILV), 217-237 (VGAA…ALYI), and 249-269 (ALAA…IVLL). The disordered stretch occupies residues 295–314 (ESQLANEGSESSDSANSTSQ).

Belongs to the UPF0761 family.

It is found in the cell inner membrane. The protein is UPF0761 membrane protein VP0125 of Vibrio parahaemolyticus serotype O3:K6 (strain RIMD 2210633).